The following is a 441-amino-acid chain: Zinc finger protein ZIC 3 (441 aa).

The C2H2-type 1; atypical zinc finger occupies 222 to 257 (LSCKWLEESTMNHPQKTCDRTFSSMHELVTHMTMEH). The C2H2-type 2; atypical zinc-finger motif lies at 266-293 (HICYWEECPRGGKSFKAKYKLVNHIRVH). 3 C2H2-type zinc fingers span residues 299-323 (FPCPFPGCGKIFARSENLKIHKRTH), 329-353 (FKCEFEGCDRRFANSSDRKKHMHVH), and 359-381 (YICKVCDKSYTHPSSLRKHMKVH). Residues 375 to 441 (RKHMKVHESQ…LPPNFNEWYV (67 aa)) are disordered. Residues 383–399 (SQGSDSSPAASSGYESA) are compositionally biased toward low complexity. The segment covering 406 to 429 (SANSEEPSKNSSATHQTNNNSHNT) has biased composition (polar residues).

It belongs to the GLI C2H2-type zinc-finger protein family. First detected at early gastrula (stage 10.25) in the dorsal lip and prospective neural plate. Also expressed in the mesoderm at early gastrulation, with expression strongest on the dorsal side. Mesodermal expression continues at stage 12 but is hardly detectable after stage 14. As gastrulation proceeds, expression decreases in the dorsal lip and increases in the prospective neural plate. At the neural plate stage (stage 14), expressed strongly in the prospective mesencephalon and anterior rhombencephalon, after which expression becomes stronger in the anterior neural folds. At early tailbud stage (stage 20), expression becomes restricted to the dorsal region of forebrain, midbrain and hindbrain, and weakly to the dorsal trunk. After mid-tailbud stage, expression decreases in the diencephalon, appears in the lateral mesoderm of the tailbud region and becomes restricted in the dorsal part of the neural tube.

It is found in the nucleus. The protein localises to the cytoplasm. Functionally, probably acts as a transcriptional activator. May bind to the minimal GLI-consensus sequence 5'-GGGTGGTC-3'. Can determine the ectodermal cell fate and promote the earliest step of neural and neural crest development. Involved in establishing left-right asymmetry in the embryo. The chain is Zinc finger protein ZIC 3 (zic3) from Xenopus laevis (African clawed frog).